The sequence spans 156 residues: Protein GLUTAMINE DUMPER 4 (156 aa).

Topologically, residues 1 to 39 are extracellular; it reads MRPLSIKPTSLDVARHATSVESFGNHRPPISPWHSPVPY. The helical transmembrane segment at 40–60 threads the bilayer; the sequence is LFGGLAAMLGLIAFALLILAC. Residues 61-156 are Cytoplasmic-facing; that stretch reads SYWRLSTSGD…AKENEETTSQ (96 aa). Positions 67–87 are disordered; the sequence is TSGDDSGERVDEEKESRSGVK. The segment covering 72 to 84 has biased composition (basic and acidic residues); that stretch reads SGERVDEEKESRS. The VIMAG signature appears at 99–103; it reads VIMAG. The segment at 136–156 is disordered; sequence AGEEKMGDREKAKENEETTSQ.

Belongs to the GLUTAMINE DUMPER 1 (TC 9.B.60) family. Expressed in the vascular tissues, even in the minor veins of the leaves.

It is found in the membrane. Functionally, probable subunit of an amino acid transporter involved in the regulation of the amino acid metabolism. Stimulates amino acid export by activating nonselective amino acid facilitators. In Arabidopsis thaliana (Mouse-ear cress), this protein is Protein GLUTAMINE DUMPER 4 (GDU4).